The following is a 192-amino-acid chain: Segregation and condensation protein B (192 aa).

This sequence belongs to the ScpB family. In terms of assembly, homodimer. Homodimerization may be required to stabilize the binding of ScpA to the Smc head domains. Component of a cohesin-like complex composed of ScpA, ScpB and the Smc homodimer, in which ScpA and ScpB bind to the head domain of Smc. The presence of the three proteins is required for the association of the complex with DNA.

Its subcellular location is the cytoplasm. Its function is as follows. Participates in chromosomal partition during cell division. May act via the formation of a condensin-like complex containing Smc and ScpA that pull DNA away from mid-cell into both cell halves. This chain is Segregation and condensation protein B, found in Oceanobacillus iheyensis (strain DSM 14371 / CIP 107618 / JCM 11309 / KCTC 3954 / HTE831).